The sequence spans 395 residues: Multiple organellar RNA editing factor 8, chloroplastic/mitochondrial (395 aa).

A chloroplast and mitochondrion-targeting transit peptide spans 1 to 56 (MATHTISRSILCRPAKSLSFLFTRSFASSAPLAKSPASSLLSRSRPLVAAFSSVFR). Over residues 211–236 (ANERNRRNDRPRNNDRSRNFERRREN) the composition is skewed to basic and acidic residues. Residues 211 to 395 (ANERNRRNDR…RDGSGNPYQG (185 aa)) form a disordered region. A compositionally biased stretch (pro residues) spans 240–300 (GPPPQRPPMG…GPRHPPPYGA (61 aa)). A compositionally biased stretch (low complexity) spans 313 to 334 (QNYGGTPPPNYGGAPPANNMGG). A compositionally biased stretch (pro residues) spans 335–355 (APPPNYGGGPPPQYGAVPPPQ). Over residues 356–385 (YGGAPPQNNNYQQQGSGMQQPQYQNNYPPN) the composition is skewed to low complexity.

The protein belongs to the MORF family. In terms of assembly, interacts with protoporphyrinogen oxidase 1 PPOX1. Interacts with PCMP-H52/MEF10. Homodimer and heterodimers with MORF1/RIP8, MORF2/RIP2, MORF3/RIP3, MORF4/RIP4, MORF5/RIP5, MORF6/RIP6 and MORF7/RIP7. Interacts with RBG3/ORRM3. Interacts with PCMP-A2/PMD1. Interacts with ORRM1 and VAT3/OZ1. Interacts with PCMP-H13/MEF35. Interacts with RBG5/ORRM4. Interacts with ORRM6.

The protein localises to the mitochondrion. It is found in the plastid. It localises to the chloroplast. Involved in organellar RNA editing. Required for the processing of numerous RNA editing sites in mitochondria and plastids. Binds to the plastid RARE1 factor, a pentatricopeptide repeat-containing protein involved in RNA editing. The protein is Multiple organellar RNA editing factor 8, chloroplastic/mitochondrial of Arabidopsis thaliana (Mouse-ear cress).